Here is a 599-residue protein sequence, read N- to C-terminus: Elongation factor 4 (599 aa).

The region spanning 2–184 (KNIRNFSIIA…RLVRDIPPPQ (183 aa)) is the tr-type G domain. Residues 14–19 (DHGKST) and 131–134 (NKID) each bind GTP.

The protein belongs to the TRAFAC class translation factor GTPase superfamily. Classic translation factor GTPase family. LepA subfamily.

Its subcellular location is the cell inner membrane. It carries out the reaction GTP + H2O = GDP + phosphate + H(+). Required for accurate and efficient protein synthesis under certain stress conditions. May act as a fidelity factor of the translation reaction, by catalyzing a one-codon backward translocation of tRNAs on improperly translocated ribosomes. Back-translocation proceeds from a post-translocation (POST) complex to a pre-translocation (PRE) complex, thus giving elongation factor G a second chance to translocate the tRNAs correctly. Binds to ribosomes in a GTP-dependent manner. This chain is Elongation factor 4, found in Salmonella paratyphi C (strain RKS4594).